The sequence spans 471 residues: Putative multidrug resistance protein MdtD (471 aa).

13 consecutive transmembrane segments (helical) span residues 12 to 32 (LWIV…VNTA), 49 to 69 (MVIV…GWMA), 72 to 92 (IGVR…SLFC), 101 to 123 (LVMS…RLTV), 138 to 158 (FVTL…GILV), 165 to 185 (WIFL…LWLM), 195 to 215 (FDIF…LALD), 220 to 240 (LGIS…SILW), 265 to 285 (IGLF…FMTP), 286 to 306 (VFLQ…MIPM), 342 to 362 (LVFM…VLFF), 393 to 413 (LLSM…GLLL), and 431 to 451 (VFLY…LIFA).

Belongs to the major facilitator superfamily. TCR/Tet family.

The protein localises to the cell inner membrane. In Enterobacter sp. (strain 638), this protein is Putative multidrug resistance protein MdtD.